A 496-amino-acid polypeptide reads, in one-letter code: Glycerol kinase (496 aa).

T12 is a binding site for ADP. ATP-binding residues include T12, T13, and S14. Residue T12 coordinates sn-glycerol 3-phosphate. Position 16 (R16) interacts with ADP. Residues R82, E83, and Y134 each contribute to the sn-glycerol 3-phosphate site. Glycerol is bound by residues R82, E83, and Y134. H230 carries the post-translational modification Phosphohistidine; by HPr. Position 244 (D244) interacts with sn-glycerol 3-phosphate. Residues D244 and Q245 each coordinate glycerol. Positions 266 and 309 each coordinate ADP. The ATP site is built by T266, G309, Q313, and G410. 2 residues coordinate ADP: G410 and N414.

This sequence belongs to the FGGY kinase family. In terms of assembly, homotetramer and homodimer (in equilibrium). In terms of processing, the phosphoenolpyruvate-dependent sugar phosphotransferase system (PTS), including enzyme I, and histidine-containing protein (HPr) are required for the phosphorylation, which leads to the activation of the enzyme.

The enzyme catalyses glycerol + ATP = sn-glycerol 3-phosphate + ADP + H(+). Its pathway is polyol metabolism; glycerol degradation via glycerol kinase pathway; sn-glycerol 3-phosphate from glycerol: step 1/1. With respect to regulation, activated by phosphorylation and inhibited by fructose 1,6-bisphosphate (FBP). Key enzyme in the regulation of glycerol uptake and metabolism. Catalyzes the phosphorylation of glycerol to yield sn-glycerol 3-phosphate. The polypeptide is Glycerol kinase (Geobacillus sp. (strain WCH70)).